The primary structure comprises 137 residues: Probable leaf thionin (137 aa).

A signal peptide spans 1–28 (MATNKSIKSVVICVLILGLVLEQVQVEG). 4 disulfides stabilise this stretch: C31/C68, C32/C60, C40/C58, and C44/C54. Positions 75–137 (LNLLPESGEP…DGDVIQSVEA (63 aa)) are cleaved as a propeptide — acidic domain.

This sequence belongs to the plant thionin (TC 1.C.44) family. 4 C-C subfamily.

The protein localises to the secreted. Thionins are small plant proteins which are toxic to animal cells. They seem to exert their toxic effect at the level of the cell membrane. Their precise function is not known. The chain is Probable leaf thionin from Hordeum vulgare (Barley).